The primary structure comprises 335 residues: [Citrate [pro-3S]-lyase] ligase (335 aa).

The region spanning 1–131 is the N-acetyltransferase domain; the sequence is MQFERISTEQ…SATRLQKQCS (131 aa).

It carries out the reaction holo-[citrate lyase ACP] + acetate + ATP = acetyl-[citrate lyase ACP] + AMP + diphosphate. Its function is as follows. Acetylation of prosthetic group (2-(5''-phosphoribosyl)-3'-dephosphocoenzyme-A) of the gamma subunit of citrate lyase. In Haemophilus influenzae (strain ATCC 51907 / DSM 11121 / KW20 / Rd), this protein is [Citrate [pro-3S]-lyase] ligase (citC).